Consider the following 408-residue polypeptide: Biphenyl dioxygenase system ferredoxin--NAD(+) reductase component (408 aa).

4-35 (TIAIIGAGLAGSTAARALRAQGYEGRIHLLGD) is a binding site for FAD. 145–173 (SLVIVGGGLIGCEVATTARKLSVHVTILE) provides a ligand contact to NAD(+).

The protein belongs to the bacterial ring-hydroxylating dioxygenase ferredoxin reductase family. As to quaternary structure, this dioxygenase system consists of four proteins: the two subunits of the hydroxylase component (BphA and BphE), a ferredoxin (BphF) and a ferredoxin reductase (BphG). The cofactor is FAD.

It carries out the reaction 2 reduced [2Fe-2S]-[ferredoxin] + NAD(+) + H(+) = 2 oxidized [2Fe-2S]-[ferredoxin] + NADH. It functions in the pathway xenobiotic degradation; biphenyl degradation. In terms of biological role, part of the electron transfer component of biphenyl dioxygenase, transfers electrons from ferredoxin (BphF) to NADH. This is Biphenyl dioxygenase system ferredoxin--NAD(+) reductase component (bphG) from Paraburkholderia xenovorans (strain LB400).